Reading from the N-terminus, the 261-residue chain is UPF0177 protein YvdC (261 aa).

6 helical membrane passes run 15–35, 43–63, 84–104, 123–143, 197–217, and 239–259; these read WVIV…IFHL, VLSI…VLFI, LDTV…YLIA, IIIG…FAQI, YFAF…TDLY, and FYLN…IALV.

This sequence belongs to the UPF0177 family.

The protein localises to the cell membrane. This Lactococcus lactis subsp. lactis (strain IL1403) (Streptococcus lactis) protein is UPF0177 protein YvdC (yvdC).